Consider the following 288-residue polypeptide: MALSFKNSSGSIKAKRIKDGLVNANDIETTVIDFSYEKPDLSSVDGFSLKSLLSSDGWHIVVAYQCVTNSEQLNNNKKNNKTQKFRLFTFDIIVIPGLKPNKSKNVVSYNRFMALCIGMICYHKKWKVFNWTRKSYEDNTSTIDFNEDEDFMNKLAMSAGFSKEHKYHWFYSTGFEYTFDIFPAEVIAMSLFRWSHRVELKIKYTHESDLVEPMVRQLTKKGTISDVMDIIGKSTIAKRYEEIVKDRSSTGIGTKYNDVLDEFKEIIKKINSSSLDSTIKDCLKDIEE.

Ala-2 carries the post-translational modification N-acetylalanine; by host.

It belongs to the high plain virus capsid family.

The protein localises to the virion. This chain is Capsid protein, found in High plains virus (isolate Kansas 2004).